The sequence spans 555 residues: Tetracycline 7-halogenase (555 aa).

22–27 (GSGLSG) serves as a coordination point for FAD.

It belongs to the flavin-dependent halogenase family. Bacterial tryptophan halogenase subfamily. As to quaternary structure, homodimer.

The catalysed reaction is tetracycline + FADH2 + chloride + O2 = 7-chlorotetracycline + FAD + 2 H2O + H(+). The protein operates within antibiotic biosynthesis. In terms of biological role, involved in the biosynthesis of chlorotetracycline (CTC), an important member from antibiotics tetracycline (TC) family, which inhibits protein synthesis in bacteria and is widely involved in clinical therapy, animal feeds and aquaculture. Utilizes FADH(2) supplied by the flavin reductase CtcQ, to catalyze the chlorination of tetracycline (TC) at C7 position, leading to the production of 7-chlorotetracycline. The enzyme forms a lysine chloramine intermediate on an internal lysine residue before transferring the chlorine to the substrate. It is stereo-selective for the 4S (natural) isomer of tetracycline. The polypeptide is Tetracycline 7-halogenase (Kitasatospora aureofaciens (Streptomyces aureofaciens)).